The following is a 36-amino-acid chain: Histone H1-like protein EM5 (36 aa).

One can recognise an H15 domain in the interval 1–36 (MITAAVGALKERGGSSRQAILKYIQANFKVQANPAA).

It belongs to the histone H1/H5 family. In terms of tissue distribution, sperm.

The protein resides in the nucleus. It is found in the chromosome. The chain is Histone H1-like protein EM5 from Ensis minor (Razor shell).